The chain runs to 360 residues: Protein Wnt-2 (360 aa).

The first 25 residues, 1 to 25 (MNAPLGGIWLWLPLLLTWLTPEVNS), serve as a signal peptide directing secretion. Disulfide bonds link Cys-76–Cys-87, Cys-127–Cys-135, Cys-137–Cys-157, Cys-206–Cys-220, Cys-208–Cys-215, Cys-278–Cys-309, Cys-294–Cys-304, Cys-308–Cys-348, Cys-324–Cys-339, Cys-326–Cys-336, and Cys-331–Cys-332. Ser-212 carries O-palmitoleoyl serine; by PORCN lipidation. Asn-295 carries N-linked (GlcNAc...) asparagine glycosylation.

It belongs to the Wnt family. Palmitoleoylation is required for efficient binding to frizzled receptors. Depalmitoleoylation leads to Wnt signaling pathway inhibition.

Its subcellular location is the secreted. It localises to the extracellular space. The protein localises to the extracellular matrix. In terms of biological role, ligand for members of the frizzled family of seven transmembrane receptors. Functions in the canonical Wnt signaling pathway that results in activation of transcription factors of the TCF/LEF family. Functions as a upstream regulator of FGF10 expression. Plays an important role in embryonic lung development. May contribute to embryonic brain development by regulating the proliferation of dopaminergic precursors and neurons. The sequence is that of Protein Wnt-2 (WNT2) from Nomascus leucogenys (Northern white-cheeked gibbon).